The primary structure comprises 217 residues: Probable transaldolase (217 aa).

The Schiff-base intermediate with substrate role is filled by lysine 83.

This sequence belongs to the transaldolase family. Type 3B subfamily.

Its subcellular location is the cytoplasm. The enzyme catalyses D-sedoheptulose 7-phosphate + D-glyceraldehyde 3-phosphate = D-erythrose 4-phosphate + beta-D-fructose 6-phosphate. The protein operates within carbohydrate degradation; pentose phosphate pathway; D-glyceraldehyde 3-phosphate and beta-D-fructose 6-phosphate from D-ribose 5-phosphate and D-xylulose 5-phosphate (non-oxidative stage): step 2/3. Transaldolase is important for the balance of metabolites in the pentose-phosphate pathway. The polypeptide is Probable transaldolase (Bartonella tribocorum (strain CIP 105476 / IBS 506)).